The primary structure comprises 227 residues: NADH-quinone oxidoreductase subunit C (227 aa).

It belongs to the complex I 30 kDa subunit family. NDH-1 is composed of 14 different subunits. Subunits NuoB, C, D, E, F, and G constitute the peripheral sector of the complex.

It is found in the cell inner membrane. The catalysed reaction is a quinone + NADH + 5 H(+)(in) = a quinol + NAD(+) + 4 H(+)(out). NDH-1 shuttles electrons from NADH, via FMN and iron-sulfur (Fe-S) centers, to quinones in the respiratory chain. The immediate electron acceptor for the enzyme in this species is believed to be ubiquinone. Couples the redox reaction to proton translocation (for every two electrons transferred, four hydrogen ions are translocated across the cytoplasmic membrane), and thus conserves the redox energy in a proton gradient. This chain is NADH-quinone oxidoreductase subunit C, found in Legionella pneumophila (strain Lens).